The primary structure comprises 311 residues: AT-hook motif nuclear-localized protein 27 (311 aa).

Residues 40 to 105 (HHHQHQQHQQ…KNKAKPPIIV (66 aa)) are disordered. The span at 55-75 (DDSRESDHSNKDHHQQGRPDS) shows a compositional bias: basic and acidic residues. Residues 86-98 (KRPRGRPPGSKNK) constitute a DNA-binding region (a.T hook). Residues 110 to 258 (PNALRSHVLE…EEGGGGGGGG (149 aa)) form the PPC domain. A required for the binding to non-AHL interactors region spans residues 178 to 183 (GRFEIL). The disordered stretch occupies residues 246–311 (EEEEEGGGGG…GAGTPSRPPF (66 aa)). Gly residues predominate over residues 252–262 (GGGGGGGGGGP). Positions 263 to 277 (PQMQQAPSASPPSGV) are enriched in low complexity. Positions 278–292 (TGQGQLGGNVGGYGF) are enriched in gly residues.

As to quaternary structure, homodimer. Interacts with AHL12, AHL25, AHL29, TCP4, TCP13, EF114, ATAF2/NAC081, histone H2B.1, histone H3.3 and histone H4. In terms of tissue distribution, expressed in the hypocotyl and the vascular tissue of seedling.

It is found in the nucleus. Its function is as follows. Transcription factor that specifically binds AT-rich DNA sequences related to the nuclear matrix attachment regions (MARs). Negatively regulates plant innate immunity (PTI) to pathogens through the down-regulation of the PAMP-triggered FRK1 expression. Acts redundantly with AHL18, AHL22 and AHL29 in the regulation of flowering and regulation of the hypocotyl elongation. Acts as a chromatin remodeling factor that negatively regulates the leaf senescence. Acts redundantly with AHL29/SOB3 to modulate hypocotyl growth inhibition in response to light. The chain is AT-hook motif nuclear-localized protein 27 from Arabidopsis thaliana (Mouse-ear cress).